A 435-amino-acid polypeptide reads, in one-letter code: Glutamyl-tRNA reductase (435 aa).

Residues 49–52 (TCNR), Ser-109, 114–116 (ETQ), and Gln-120 each bind substrate. The Nucleophile role is filled by Cys-50. 189 to 194 (GAGEMS) provides a ligand contact to NADP(+).

Belongs to the glutamyl-tRNA reductase family. Homodimer.

It carries out the reaction (S)-4-amino-5-oxopentanoate + tRNA(Glu) + NADP(+) = L-glutamyl-tRNA(Glu) + NADPH + H(+). The protein operates within porphyrin-containing compound metabolism; protoporphyrin-IX biosynthesis; 5-aminolevulinate from L-glutamyl-tRNA(Glu): step 1/2. In terms of biological role, catalyzes the NADPH-dependent reduction of glutamyl-tRNA(Glu) to glutamate 1-semialdehyde (GSA). The protein is Glutamyl-tRNA reductase of Listeria monocytogenes serovar 1/2a (strain ATCC BAA-679 / EGD-e).